Here is a 379-residue protein sequence, read N- to C-terminus: Armadillo repeat-containing X-linked protein 3 (379 aa).

The Mitochondrial intermembrane segment spans residues 1 to 6 (MGYARK). Mitochondrion outer membrane (MOM)-targeting sequence regions lie at residues 1–6 (MGYARK) and 26–37 (RLTRGRKQNKEK). Residues 7-29 (VGWVTAGLVIGAGACYCIYRLTR) form a helical; Signal-anchor membrane-spanning segment. Over 30–379 (GRKQNKEKMA…AEHMFPKSQE (350 aa)) the chain is Cytoplasmic. Ser61, Ser67, and Ser72 each carry phosphoserine. A nuclear localization signal region spans residues 89-98 (RARARARARA). Positions 95 to 106 (RARATRARRAVQ) are enriched in basic residues. The tract at residues 95–116 (RARATRARRAVQKRASPNSDDT) is disordered. At Ser110 the chain carries Phosphoserine. 3 ARM repeats span residues 111 to 151 (PNSD…NNAA), 153 to 192 (AFNRDIIRDLGGLPIVAKILNTRDPIVKEKALIVLNNLSV), and 233 to 272 (VTNEYQHMLANSISDFFRLFSAGNEETKLQVLKLLLNLAE).

It belongs to the eutherian X-chromosome-specific Armcx family. In terms of assembly, interacts (via ARM domain) with MIRO1, MIRO2 and TRAK2. The interaction with Miro is calcium-dependent. Interacts with SOX10.

It localises to the mitochondrion outer membrane. The protein localises to the cytoplasm. It is found in the nucleus. Regulates mitochondrial aggregation and transport in axons in living neurons. May link mitochondria to the TRAK2-kinesin motor complex via its interaction with Miro and TRAK2. Mitochondrial distribution and dynamics is regulated through ARMCX3 protein degradation, which is promoted by PCK and negatively regulated by WNT1. Enhances the SOX10-mediated transactivation of the neuronal acetylcholine receptor subunit alpha-3 and beta-4 subunit gene promoters. The sequence is that of Armadillo repeat-containing X-linked protein 3 (ARMCX3) from Homo sapiens (Human).